The primary structure comprises 202 residues: Large ribosomal subunit protein uL5 (202 aa).

The segment covering 1-17 (MSAKAATKNATKVAVKA) has biased composition (low complexity). The interval 1 to 30 (MSAKAATKNATKVAVKAPEATTPVETKKSK) is disordered.

The protein belongs to the universal ribosomal protein uL5 family. Component of the large ribosomal subunit.

It is found in the nucleus. The protein localises to the cytoplasm. Component of the ribosome, a large ribonucleoprotein complex responsible for the synthesis of proteins in the cell. The small ribosomal subunit (SSU) binds messenger RNAs (mRNAs) and translates the encoded message by selecting cognate aminoacyl-transfer RNA (tRNA) molecules. The large subunit (LSU) contains the ribosomal catalytic site termed the peptidyl transferase center (PTC), which catalyzes the formation of peptide bonds, thereby polymerizing the amino acids delivered by tRNAs into a polypeptide chain. The nascent polypeptides leave the ribosome through a tunnel in the LSU and interact with protein factors that function in enzymatic processing, targeting, and the membrane insertion of nascent chains at the exit of the ribosomal tunnel. This Dictyostelium discoideum (Social amoeba) protein is Large ribosomal subunit protein uL5 (rpl11).